Consider the following 276-residue polypeptide: MAPRKRTQNAKSKKNPKAPKLEAFLLDFDDEVHTIVERLKEKTNNLLKDADNLYKTALIKLPMAVRKMNWIEYCNLEKPKSPVDDSKVREEAAQVELAIAGNHTIPKVAAKEAKSSANSEDENMAPLKSTMKKKKASKKAPSTSKKPRTLSISKQGGTIQRTTRKPLITPARSFLDSSIIGATPLITPRFDPRLPKTPALRSALHREKVYSMSVNGSPLSAGGEDIVISVPIGNGECIQLLASEMDSVDLSQLDEKALRSIRNLQNRLTTLCGSSK.

Residues 111–158 form a disordered region; it reads KEAKSSANSEDENMAPLKSTMKKKKASKKAPSTSKKPRTLSISKQGGT.

It belongs to the borealin family. As to quaternary structure, component of the CPC complex.

Its subcellular location is the nucleus. It localises to the chromosome. The protein localises to the centromere. It is found in the cytoplasm. The protein resides in the cytoskeleton. Its subcellular location is the spindle. Functionally, component of the chromosomal passenger complex (CPC), a complex that acts as a key regulator of mitosis. The CPC complex has essential functions at the centromere in ensuring correct chromosome alignment and segregation and is required for chromatin-induced microtubule stabilization and spindle assembly. The chain is Borealin (cdca8) from Danio rerio (Zebrafish).